The chain runs to 142 residues: Small ribosomal subunit protein bS6 (142 aa).

Over residues 110–133 (NKKPSHAKEKHEKTEHTHSHHAEE) the composition is skewed to basic and acidic residues. Residues 110-142 (NKKPSHAKEKHEKTEHTHSHHAEEAESVGSHSE) are disordered.

The protein belongs to the bacterial ribosomal protein bS6 family.

Binds together with bS18 to 16S ribosomal RNA. This chain is Small ribosomal subunit protein bS6, found in Helicobacter pylori (strain P12).